The sequence spans 197 residues: MKIVIVALPGSGKTTILNFVKQKLPDVKIVNYGDVMLEIAKKRFGIQHRDEMRKKIPVDEYRKVQEEAAEYIASLTGDVIIDTHASIKIGGGYYPGLPDRIISKLKPDVILLLEYDPKVILERRKKDPDRFRDLESEEEIEMHQQANRYYAFAAANAGESTVHVLNFRGKPESRPFEHAEVAAEYIVNLILRTRQKS.

ATP is bound at residue 7 to 15 (ALPGSGKTT).

This sequence belongs to the archaeal adenylate kinase family.

The protein localises to the cytoplasm. It catalyses the reaction AMP + ATP = 2 ADP. The polypeptide is Adenylate kinase (adkA) (Pyrobaculum aerophilum (strain ATCC 51768 / DSM 7523 / JCM 9630 / CIP 104966 / NBRC 100827 / IM2)).